A 485-amino-acid polypeptide reads, in one-letter code: Two-component response regulator ORR31 (485 aa).

In terms of domain architecture, Response regulatory spans 13-138 (RVMPVDGDTK…TMAQLWRVVA (126 aa)). Asp66 carries the 4-aspartylphosphate modification. Residues 195 to 204 (LTINVDSGSS) are compositionally biased toward polar residues. Residues 195 to 236 (LTINVDSGSSDGADANPRQKLEHKKDAKGPLGQHVASHLQPQ) form a disordered region. The span at 211-222 (PRQKLEHKKDAK) shows a compositional bias: basic and acidic residues.

This sequence belongs to the ARR family. Type-B subfamily. Post-translationally, two-component system major event consists of a His-to-Asp phosphorelay between a sensor histidine kinase (HK) and a response regulator (RR). In plants, the His-to-Asp phosphorelay involves an additional intermediate named Histidine-containing phosphotransfer protein (HPt). This multistep phosphorelay consists of a His-Asp-His-Asp sequential transfer of a phosphate group between first a His and an Asp of the HK protein, followed by the transfer to a conserved His of the HPt protein and finally the transfer to an Asp in the receiver domain of the RR protein.

Functionally, functions as a response regulator involved in His-to-Asp phosphorelay signal transduction system. Phosphorylation of the Asp residue in the receiver domain activates the ability of the protein to promote the transcription of target genes. May directly activate some type-A response regulators in response to cytokinins. The chain is Two-component response regulator ORR31 from Oryza sativa subsp. japonica (Rice).